The primary structure comprises 341 residues: MRRNSERPVRITEVCLRDGSHVMKHQFTEEQVRFVTRALDEAGMHYIEVSHGDGLGGSTLQYGKSLVNEMKLIEAAVDECKQAQIAVLLIPGIGTIHELKQAANIGAKLVRVATHVTEADVSAQHIQFARELGMEVCGFLMMAHSASVEKLVEQGKLMESYGAEAVYVTDSAGALLPHEVRERIRALRQSLNIEIGFHGHNNLSVAVANTITAIEEGATRIDGSVRCLGAGAGNAQTEVLLAVLDRMGYKLDIDLYKMMDVAEEVVAPLLPVPQEIQKGSLVMGYAGVYSSFLLHAERAAQRFNVDARDILIELGKRKVVGGQEDMILDVAAELAKIKMEV.

A Pyruvate carboxyltransferase domain is found at 9-259 (VRITEVCLRD…KLDIDLYKMM (251 aa)). 17 to 18 (RD) lines the substrate pocket. Asp-18 contacts Mn(2+). Residue His-21 is the Proton acceptor of the active site. Substrate is bound by residues Ser-171 and His-198. His-198 and His-200 together coordinate Mn(2+). Tyr-289 contacts substrate.

It belongs to the 4-hydroxy-2-oxovalerate aldolase family.

It catalyses the reaction (S)-4-hydroxy-2-oxopentanoate = acetaldehyde + pyruvate. In Bacillus cereus (strain 03BB102), this protein is 4-hydroxy-2-oxovalerate aldolase (dmpG).